We begin with the raw amino-acid sequence, 189 residues long: Stathmin-4 (189 aa).

Residues Cys-20 and Cys-22 are each lipidated (S-palmitoyl cysteine). The SLD domain maps to 48–189 (SDMEVIELNK…NKELKEEASR (142 aa)). A Phosphoserine modification is found at Ser-90. Residues 90–188 (SLEEIQKKLE…KNKELKEEAS (99 aa)) are a coiled coil. The interval 168-189 (QEKDKHAEEVRKNKELKEEASR) is disordered.

Belongs to the stathmin family.

The protein localises to the golgi apparatus. Its subcellular location is the cell projection. It is found in the growth cone. It localises to the axon. Its function is as follows. Exhibits microtubule-destabilizing activity. The chain is Stathmin-4 (STMN4) from Homo sapiens (Human).